The primary structure comprises 434 residues: GTPase Obg (434 aa).

Positions 1 to 158 (MFLDTAKIKV…RELQLELKIL (158 aa)) constitute an Obg domain. The OBG-type G domain maps to 159-336 (ADVGLVGFPS…LLDATAELLD (178 aa)). Residues 165–172 (GFPSVGKS), 190–194 (FTTIV), 212–215 (DLPG), 282–285 (NKMD), and 317–319 (SGL) each bind GTP. Mg(2+) contacts are provided by Ser172 and Thr192. Residues 356–434 (GFDEEEKAFE…IGKFEFEFVD (79 aa)) form the OCT domain.

This sequence belongs to the TRAFAC class OBG-HflX-like GTPase superfamily. OBG GTPase family. As to quaternary structure, monomer. The cofactor is Mg(2+).

Its subcellular location is the cytoplasm. In terms of biological role, an essential GTPase which binds GTP, GDP and possibly (p)ppGpp with moderate affinity, with high nucleotide exchange rates and a fairly low GTP hydrolysis rate. Plays a role in control of the cell cycle, stress response, ribosome biogenesis and in those bacteria that undergo differentiation, in morphogenesis control. In Streptococcus pneumoniae (strain ATCC 700669 / Spain 23F-1), this protein is GTPase Obg.